We begin with the raw amino-acid sequence, 724 residues long: Ribosomal RNA large subunit methyltransferase K/L (724 aa).

One can recognise a THUMP domain in the interval 42–153 (DAQRLVLWSR…KGRATLSVDL (112 aa)).

Belongs to the methyltransferase superfamily. RlmKL family.

It is found in the cytoplasm. The enzyme catalyses guanosine(2445) in 23S rRNA + S-adenosyl-L-methionine = N(2)-methylguanosine(2445) in 23S rRNA + S-adenosyl-L-homocysteine + H(+). It carries out the reaction guanosine(2069) in 23S rRNA + S-adenosyl-L-methionine = N(2)-methylguanosine(2069) in 23S rRNA + S-adenosyl-L-homocysteine + H(+). In terms of biological role, specifically methylates the guanine in position 2445 (m2G2445) and the guanine in position 2069 (m7G2069) of 23S rRNA. The polypeptide is Ribosomal RNA large subunit methyltransferase K/L (Xylella fastidiosa (strain 9a5c)).